Reading from the N-terminus, the 555-residue chain is Benzoyl-CoA-dihydrodiol lyase (555 aa).

It belongs to the benzoyl-CoA oxygenase component C family. In terms of assembly, homodimer.

The enzyme catalyses 2,3-epoxy-2,3-dihydrobenzoyl-CoA + 2 H2O = (3Z)-6-oxohex-3-enoyl-CoA + formate + H(+). Catalyzes the ring opening of 2,3-epoxy-2,3-dihydroxybenzoyl-CoA to form 3,4-didehydroadipyl-CoA semialdehyde. The chain is Benzoyl-CoA-dihydrodiol lyase (boxC) from Aromatoleum evansii (Azoarcus evansii).